A 570-amino-acid polypeptide reads, in one-letter code: Apyrase (570 aa).

Residues 1–23 form the signal peptide; that stretch reads MALVRFATIITVLCHLAIQDGAA. The a divalent metal cation site is built by D43, H45, and D94. The N-linked (GlcNAc...) asparagine glycan is linked to N108. The a divalent metal cation site is built by N126, H229, and H253. N287 and N326 each carry an N-linked (GlcNAc...) asparagine glycan. R367 is an AMP binding site. A glycan (N-linked (GlcNAc...) asparagine) is linked at N387. AMP contacts are provided by R402 and D507. N-linked (GlcNAc...) asparagine glycans are attached at residues N552 and N555.

The protein belongs to the 5'-nucleotidase family. In terms of assembly, interacts with human PLAT; the interaction results in PLAT activation probably via an allosteric activation mechanism. The cofactor is a divalent metal cation. Saliva (at protein level). Salivary gland (at protein level). Not detected in midgut.

Its subcellular location is the secreted. The catalysed reaction is a ribonucleoside 5'-triphosphate + 2 H2O = a ribonucleoside 5'-phosphate + 2 phosphate + 2 H(+). In terms of biological role, cleaves adenosine triphosphate (ATP) and adenosine diphosphate (ADP) to adenosine monophosphate (AMP) and inorganic phosphate. Enhances fibrin degradation in the midgut blood bolus. Activates human tissue plasminogen activator (PLAT), probably via an allosteric activation mechanism. Inhibits ADP-mediated host platelet aggregation in vitro and in mosquito midgut. Inhibits host neutrophil activation in the mosquito midgut: reduces neutrophil extracellular traps formation in the presence of platelets and the formation of total cell- and mitochondrial-derived reactive oxygen species. Its function is as follows. (Microbial infection) Promotes Plasmodium berghei parasite transmission from the mammalian host to the mosquito probably by reducing the blood bolus viscosity. Facilitates sporozoite transmission from the mosquito to the mammalian host during blood feeding. This Anopheles gambiae (African malaria mosquito) protein is Apyrase.